The chain runs to 422 residues: MLQWRRRHCCFAKMTWSPKRSLLRTPLTGVLSLVFLFAMFLFFNHHDWLPGRPGFKENPVTYTFRGFRSTKSETNHSSLRTIWKEVAPQTLRPHTASNSSNTELSPQGVTGLQNTLSANGSIYNEKGTGHPNSYHFKYIINEPEKCQEKSPFLILLIAAEPGQIEARRAIRQTWGNETLAPGIQIIRVFLLGISIKLNGYLQHAIQEESRQYHDIIQQEYLDTYYNLTIKTLMGMNWVATYCPHTPYVMKTDSDMFVNTEYLIHKLLKPDLPPRHNYFTGYLMRGYAPNRNKDSKWYMPPDLYPSERYPVFCSGTGYVFSGDLAEKIFKVSLGIRRLHLEDVYVGICLAKLRVDPVPPPNEFVFNHWRVSYSSCKYSHLITSHQFQPSELIKYWNHLQQNKHNACANAAKEKAGRYRHRKLH.

Topologically, residues 1–20 (MLQWRRRHCCFAKMTWSPKR) are cytoplasmic. A helical; Signal-anchor for type II membrane protein transmembrane segment spans residues 21 to 43 (SLLRTPLTGVLSLVFLFAMFLFF). Topologically, residues 44–422 (NHHDWLPGRP…AGRYRHRKLH (379 aa)) are lumenal. N-linked (GlcNAc...) asparagine glycans are attached at residues Asn-75, Asn-98, Asn-119, Asn-176, and Asn-226. Residues 91 to 110 (LRPHTASNSSNTELSPQGVT) are disordered. Positions 95–110 (TASNSSNTELSPQGVT) are enriched in polar residues.

Belongs to the glycosyltransferase 31 family. Mn(2+) is required as a cofactor. In terms of tissue distribution, detected in brain and heart.

It is found in the golgi apparatus membrane. The catalysed reaction is an N-acetyl-beta-D-glucosaminyl derivative + UDP-alpha-D-galactose = a beta-D-galactosyl-(1-&gt;3)-N-acetyl-beta-D-glucosaminyl derivative + UDP + H(+). It carries out the reaction a beta-D-GlcNAc-(1-&gt;3)-beta-D-Gal-(1-&gt;4)-beta-D-Glc-(1&lt;-&gt;1)-Cer(d18:1(4E)) + UDP-alpha-D-galactose = a beta-D-Gal-(1-&gt;3)-beta-D-GlcNAc-(1-&gt;3)-beta-D-Gal-(1-&gt;4)-beta-D-Glc-(1&lt;-&gt;1')-Cer(d18:1(4E)) + UDP + H(+). It catalyses the reaction a neolactoside IV(3)-beta-GlcNAc-nLc4Cer(d18:1(4E)) + UDP-alpha-D-galactose = a neolactoside IV(3)-beta-[Gal-beta-(1-&gt;3)-GlcNAc]-nLc4Cer(d18:1(4E)) + UDP + H(+). Its pathway is protein modification; protein glycosylation. Functionally, beta-1,3-galactosyltransferase that transfers galactose from UDP-galactose to substrates with a terminal beta-N-acetylglucosamine (beta-GlcNAc) residue. Can also utilize substrates with a terminal galactose residue, albeit with lower efficiency. Involved in the biosynthesis of the carbohydrate moieties of glycolipids and glycoproteins. This chain is Beta-1,3-galactosyltransferase 2, found in Mus musculus (Mouse).